Reading from the N-terminus, the 316-residue chain is Pantothenate kinase (316 aa).

Position 95-102 (95-102 (GSVAVGKS)) interacts with ATP.

This sequence belongs to the prokaryotic pantothenate kinase family.

Its subcellular location is the cytoplasm. The catalysed reaction is (R)-pantothenate + ATP = (R)-4'-phosphopantothenate + ADP + H(+). Its pathway is cofactor biosynthesis; coenzyme A biosynthesis; CoA from (R)-pantothenate: step 1/5. This chain is Pantothenate kinase, found in Shewanella sp. (strain ANA-3).